A 627-amino-acid chain; its full sequence is Neutral endopeptidase (627 aa).

One can recognise a Peptidase M13 domain in the interval 1-627 (MTRIQDDLFA…RAPENRLKIW (627 aa)). Residue histidine 475 coordinates Zn(2+). Glutamate 476 is a catalytic residue. Zn(2+) is bound by residues histidine 479 and glutamate 535. The Proton donor role is filled by aspartate 539.

Belongs to the peptidase M13 family. In terms of assembly, monomer. The cofactor is Zn(2+).

The protein localises to the cytoplasm. In terms of biological role, endopeptidase with broad substrate specificity for several oligopeptides. The chain is Neutral endopeptidase (pepO) from Lactococcus lactis subsp. cremoris (Streptococcus cremoris).